The chain runs to 874 residues: DNA mismatch repair protein MutS (874 aa).

Over residues 1-12 (MSNDRPLTHSEA) the composition is skewed to basic and acidic residues. The interval 1 to 20 (MSNDRPLTHSEAESSALRLG) is disordered. 661–668 (GPNASGKS) is an ATP binding site. Residues 854–874 (RKSSMGDPPTAPEINQGELPF) form a disordered region.

This sequence belongs to the DNA mismatch repair MutS family.

Functionally, this protein is involved in the repair of mismatches in DNA. It is possible that it carries out the mismatch recognition step. This protein has a weak ATPase activity. The protein is DNA mismatch repair protein MutS of Thermosynechococcus vestitus (strain NIES-2133 / IAM M-273 / BP-1).